Reading from the N-terminus, the 136-residue chain is Protein NrdI (136 aa).

It belongs to the NrdI family.

Functionally, probably involved in ribonucleotide reductase function. The protein is Protein NrdI of Salmonella dublin (strain CT_02021853).